The chain runs to 848 residues: Xylosyltransferase (848 aa).

Over 1 to 14 (MSLHRTLRRFLRKW) the chain is Cytoplasmic. The chain crosses the membrane as a helical; Signal-anchor for type II membrane protein span at residues 15-35 (KALVYAVSFILLIQAFFTFQS). The Lumenal segment spans residues 36-843 (SPNLMEEEHL…PKTELISVKP (808 aa)). Disulfide bonds link C145–C173, C189–C427, C446–C459, and C448–C457. UDP-alpha-D-xylose is bound by residues V219, D247, and 276–278 (TIW). An N-linked (GlcNAc...) asparagine glycan is attached at N306. A UDP-alpha-D-xylose-binding site is contributed by 379 to 380 (DW). UDP-alpha-D-xylose is bound by residues S460 and 482 to 483 (RK). Intrachain disulfides connect C529-C811 and C794-C822. N-linked (GlcNAc...) asparagine glycosylation occurs at N530. The segment at 824–848 (NTNWSSLSPDPKTELISVKPDGRIR) is disordered. N826 carries an N-linked (GlcNAc...) asparagine glycan.

The protein belongs to the glycosyltransferase 14 family. XylT subfamily. Requires a divalent metal cation as cofactor.

Its subcellular location is the endoplasmic reticulum membrane. The protein resides in the golgi apparatus membrane. The enzyme catalyses UDP-alpha-D-xylose + L-seryl-[protein] = 3-O-(beta-D-xylosyl)-L-seryl-[protein] + UDP + H(+). It participates in glycan metabolism; chondroitin sulfate biosynthesis. It functions in the pathway glycan metabolism; heparan sulfate biosynthesis. In terms of biological role, catalyzes the first step in biosynthesis of glycosaminoglycan. Transfers D-xylose from UDP-D-xylose to specific serine residues of the core protein. Initial enzyme in the biosynthesis of chondroitin sulfate and dermatan sulfate proteoglycans in fibroblasts and chondrocytes. The protein is Xylosyltransferase (xt) of Ciona intestinalis (Transparent sea squirt).